Reading from the N-terminus, the 130-residue chain is MSRVRTKTVKKASRVLIEKYYTRMTNDFHNNKRVCDEVAIIGSKPLRNKIAGYITHLMRRIERGPVRGISIKLQEEERERRDNYMPEISTVDPSQLTSIKVDTDTSDMLKAAGFNLPNVTVEDQGKNKGK.

A compositionally biased stretch (basic and acidic residues) spans 74–84 (QEEERERRDNY). The interval 74–97 (QEEERERRDNYMPEISTVDPSQLT) is disordered.

The protein belongs to the eukaryotic ribosomal protein eS17 family.

This Caenorhabditis elegans protein is Small ribosomal subunit protein eS17 (rps-17).